Here is a 452-residue protein sequence, read N- to C-terminus: MKETIVAQATAPGRGGIGILRVSGPLATEVAQAILGKCPKPRMADYLPFKDADGTILDQGIALYFKSPNSFTGEDVLELQGHGGQVVLDLLLKRILQIDGIRLARPGEFSEQAFLNDKLDLAQAEAIADLIDATSEQAARSALKSLQGEFSKKVNELVDSVIYLRTYVEASIDFPDEEIDFLADGKIEANLRGIINQLENVRSEAKQGSILREGMKVVIAGRPNAGKSSLLNALAGREAAIVTDIAGTTRDVLREHIHIDGMPLHIIDTAGLRDATDEVERIGISRAWTEIEQADRIILMLDSSDPESADLSKVRSEFLAKLPSTLPVTIVRNKIDLNGEQASESEEGGYQIISLSAQTHDGVKLLREHLKQAMGFQTGIEGGFLARRRHLDALEKAAEHLQIGLVQLTEFHAGELLAEELRLVQSYLSEITGQFTSDDLLGNIFSSFCIGK.

(6S)-5-formyl-5,6,7,8-tetrahydrofolate contacts are provided by Arg-21, Glu-78, and Lys-118. A TrmE-type G domain is found at Gly-214 to Gly-375. Asn-224 serves as a coordination point for K(+). GTP contacts are provided by residues Asn-224–Ser-229, Thr-243–Thr-249, and Asp-268–Gly-271. Residue Ser-228 coordinates Mg(2+). Thr-243, Ile-245, and Thr-248 together coordinate K(+). A Mg(2+)-binding site is contributed by Thr-249. Lys-452 serves as a coordination point for (6S)-5-formyl-5,6,7,8-tetrahydrofolate.

It belongs to the TRAFAC class TrmE-Era-EngA-EngB-Septin-like GTPase superfamily. TrmE GTPase family. As to quaternary structure, homodimer. Heterotetramer of two MnmE and two MnmG subunits. K(+) is required as a cofactor.

The protein resides in the cytoplasm. Functionally, exhibits a very high intrinsic GTPase hydrolysis rate. Involved in the addition of a carboxymethylaminomethyl (cmnm) group at the wobble position (U34) of certain tRNAs, forming tRNA-cmnm(5)s(2)U34. This Haemophilus influenzae (strain PittEE) protein is tRNA modification GTPase MnmE.